A 184-amino-acid polypeptide reads, in one-letter code: Ribosome-recycling factor (184 aa).

Belongs to the RRF family.

Its subcellular location is the cytoplasm. Responsible for the release of ribosomes from messenger RNA at the termination of protein biosynthesis. May increase the efficiency of translation by recycling ribosomes from one round of translation to another. The sequence is that of Ribosome-recycling factor from Clostridium botulinum (strain Okra / Type B1).